A 242-amino-acid chain; its full sequence is ATP-dependent dethiobiotin synthetase BioD (242 aa).

12–17 (SVGKTI) contributes to the ATP binding site. Residue T16 participates in Mg(2+) binding. The active site involves K37. An ATP-binding site is contributed by D66. Residues D66 and E124 each coordinate Mg(2+). 184–185 (NR) lines the ATP pocket.

It belongs to the dethiobiotin synthetase family. In terms of assembly, homodimer. Requires Mg(2+) as cofactor.

The protein localises to the cytoplasm. The enzyme catalyses (7R,8S)-7,8-diammoniononanoate + CO2 + ATP = (4R,5S)-dethiobiotin + ADP + phosphate + 3 H(+). The protein operates within cofactor biosynthesis; biotin biosynthesis; biotin from 7,8-diaminononanoate: step 1/2. Its function is as follows. Catalyzes a mechanistically unusual reaction, the ATP-dependent insertion of CO2 between the N7 and N8 nitrogen atoms of 7,8-diaminopelargonic acid (DAPA, also called 7,8-diammoniononanoate) to form a ureido ring. The protein is ATP-dependent dethiobiotin synthetase BioD of Mannheimia succiniciproducens (strain KCTC 0769BP / MBEL55E).